Consider the following 1166-residue polypeptide: Tectonin beta-propeller repeat-containing protein 1 (1166 aa).

4 TECPR repeats span residues 209-240 (LSVW…SLVE), 254-285 (DLIW…SMVE), 301-332 (SVVW…IEMV), and 344-376 (DQVW…KAIV). Residues serine 386, serine 388, serine 391, serine 413, and serine 418 each carry the phosphoserine modification. Residues 404–496 (RGSGTESAPS…PAELPWTNID (93 aa)) are disordered. Positions 407–416 (GTESAPSDTD) are enriched in polar residues. Residues 451-462 (TSGNTDHSTENA) are compositionally biased toward polar residues. A compositionally biased stretch (basic and acidic residues) spans 466–481 (EGKEKAPETSRSDECR). A PH domain is found at 616-722 (KTGALQWWCD…WLALLSLSCC (107 aa)). The stretch at 734–761 (QAIWSVTCKGDIFVSEPSPDLEARERLL) is one TECPR 5 repeat. A Phosphoserine modification is found at serine 943. TECPR repeat units follow at residues 958–989 (VALW…LHVG), 1003–1034 (YQVW…YHIP), 1049–1080 (TSVY…EHVS), and 1092–1132 (DQVW…DYGI).

Belongs to the TECPR1 family. As to quaternary structure, interacts with ATG5; the interaction is direct. Interacts with WIPI2. Interacts with the ATG5-ATG12 conjugate, the interaction is however mutually exclusive with ATG16, since it does not interact with ATG12-ATG5-ATG16 complex.

The protein resides in the cytoplasmic vesicle. It is found in the autophagosome membrane. Its subcellular location is the lysosome membrane. Tethering factor involved in autophagy. Involved in autophagosome maturation by promoting the autophagosome fusion with lysosomes: acts by associating with both the ATG5-ATG12 conjugate and phosphatidylinositol-3-phosphate (PtdIns(3)P) present at the surface of autophagosomes. Also involved in selective autophagy against bacterial pathogens, by being required for phagophore/preautophagosomal structure biogenesis and maturation. This Mus musculus (Mouse) protein is Tectonin beta-propeller repeat-containing protein 1 (Tecpr1).